Consider the following 230-residue polypeptide: uncharacterized protein (230 aa).

Residues 7–23 (LFTASILSLGYLVFICG) form a helical membrane-spanning segment. Residues 27-230 (KPKPTASTES…VKTEGTLKKN (204 aa)) are disordered. The segment covering 50-59 (AVPQKPAAPA) has biased composition (low complexity). Positions 60 to 83 (AEEKAPVDPKDPKSKDVDEAKKPD) are enriched in basic and acidic residues. Positions 101 to 112 (KKSKKSEKSKKK) are enriched in basic residues. Residues 113-173 (KTEEKVMSED…KEKSKDETVP (61 aa)) are compositionally biased toward basic and acidic residues. Over residues 199 to 210 (ETDEFPTIDEDA) the composition is skewed to acidic residues. The segment covering 211–230 (EKTKKTEKKDVKTEGTLKKN) has biased composition (basic and acidic residues).

It localises to the membrane. This is an uncharacterized protein from Caenorhabditis elegans.